A 183-amino-acid polypeptide reads, in one-letter code: Ribosome-recycling factor (183 aa).

Positions 134-156 (DANDELKKHQSEMSQDEVKGHQD) are disordered.

Belongs to the RRF family.

It is found in the cytoplasm. Its function is as follows. Responsible for the release of ribosomes from messenger RNA at the termination of protein biosynthesis. May increase the efficiency of translation by recycling ribosomes from one round of translation to another. The sequence is that of Ribosome-recycling factor from Leptospira biflexa serovar Patoc (strain Patoc 1 / Ames).